The chain runs to 245 residues: Polyhedrin (245 aa).

The protein belongs to the polyhedrin family.

Its function is as follows. Major component of the virus occlusion bodies, which are large proteinaceous structures (polyhedra), that protect the virus from the outside environment for extended periods until they are ingested by insect larvae. The protein is Polyhedrin of Lepidoptera (butterflies and moths).